We begin with the raw amino-acid sequence, 748 residues long: Far upstream element-binding protein 2 (748 aa).

Residues 1–78 form a disordered region; it reads MSDYNTGGPP…GIRKDAFADA (78 aa). Ser-2 bears the N-acetylserine mark. Over residues 8–17 the composition is skewed to pro residues; it reads GPPPGPPPPA. Gly residues-rich tracts occupy residues 18–28 and 36–69; these read GGGGGAAGAGG and GAGDRGGGGPGGGGPGGGGASGGPSQPPGGGGPG. Arg-40 is modified (omega-N-methylarginine). Lys-88 is subject to N6-acetyllysine. A disordered region spans residues 90 to 148; the sequence is GGDAATTVNNNTPDFGFGGQKRQLEDGDQPDSKKLASQGDSIGSQLGPIHPPPRTSMTE. Position 101 is a phosphothreonine (Thr-101). Over residues 111-123 the composition is skewed to basic and acidic residues; the sequence is RQLEDGDQPDSKK. Residue Lys-122 forms a Glycyl lysine isopeptide (Lys-Gly) (interchain with G-Cter in SUMO1); alternate linkage. Lys-122 participates in a covalent cross-link: Glycyl lysine isopeptide (Lys-Gly) (interchain with G-Cter in SUMO2); alternate. Ser-126, Ser-130, Ser-182, Ser-185, Ser-194, and Ser-275 each carry phosphoserine. 3 consecutive KH domains span residues 145–209, 234–300, and 323–387; these read SMTE…KMML, GTVQ…CEMV, and GGGI…ARII. The segment at 394–422 is disordered; sequence LRSGPPGPPGAPGMPPGGRGRGRGQGNWG. The segment covering 398–408 has biased composition (pro residues); that stretch reads PPGPPGAPGMP. A compositionally biased stretch (gly residues) spans 409-422; sequence PGGRGRGRGQGNWG. Omega-N-methylarginine is present on residues Arg-412, Arg-414, Arg-416, and Arg-443. The KH 4 domain maps to 425-492; it reads GGEMTFSIPT…QQIDHAKQLI (68 aa). Ser-481 is modified (phosphoserine). Residues 498–570 form a disordered region; sequence GPLCPVGPGP…HDPNKAAAAA (73 aa). Pro residues-rich tracts occupy residues 502-521 and 529-543; these read PVGPGPGGPGPAGPMGPFNP and PGAPPHAGGPPPHQY. Residues 572 to 583 form repeat 1; it reads DPNAAWAAYYSH. Residues 572–685 are 4 X 12 AA imperfect repeats; that stretch reads DPNAAWAAYY…SAAWAEYYRQ (114 aa). The span at 588-614 shows a compositional bias: pro residues; it reads PPGPVPGPAPAPAAPPAQGEPPQPPPT. Disordered regions lie at residues 588-650, 659-678, and 689-735; these read PPGP…KAWE, VATGGGPGAPPGSQPDYSAA, and YYGQ…PALV. Tandem repeats lie at residues 618-629, 644-655, and 674-685.

Belongs to the KHSRP family. As to quaternary structure, part of a ternary complex containing FUBP2, PTBP1, PTBP2 and HNRPH1. Interacts with PARN. Interacts with PQBP1.

The protein resides in the nucleus. The protein localises to the cytoplasm. In terms of biological role, binds to the dendritic targeting element and may play a role in mRNA trafficking. Part of a ternary complex that binds to the downstream control sequence (DCS) of the pre-mRNA. Mediates exon inclusion in transcripts that are subject to tissue-specific alternative splicing. May interact with single-stranded DNA from the far-upstream element (FUSE). May activate gene expression. Also involved in degradation of inherently unstable mRNAs that contain AU-rich elements (AREs) in their 3'-UTR, possibly by recruiting degradation machinery to ARE-containing mRNAs. This chain is Far upstream element-binding protein 2 (Khsrp), found in Mus musculus (Mouse).